Reading from the N-terminus, the 33-residue chain is Putative makorin-5 (33 aa).

The sequence is that of Putative makorin-5 (MKRN9P) from Homo sapiens (Human).